A 554-amino-acid polypeptide reads, in one-letter code: Suppressor of hairless homolog (554 aa).

Residues 1–31 (MYHPHHLPAHGQVQSHQHREDAAATSSRDVN) are disordered. 3 DNA-binding regions span residues 83–90 (KSYGNEKR), 218–227 (RLRSQTVSTR), and 291–323 (RKVD…ERMY). In terms of domain architecture, IPT/TIG spans 381–471 (PNVHSLQLNG…YPTNLTFTFT (91 aa)). Residues 489 to 554 (GSKRPSASMP…NGANMLRTAS (66 aa)) form a disordered region. Basic and acidic residues predominate over residues 508-519 (DSGRGNESDRGD).

It belongs to the Su(H) family. Interacts with activated Notch proteins.

The protein localises to the nucleus. Its function is as follows. Transcriptional regulator that plays a central role in Notch signaling, a signaling pathway involved in cell-cell communication that regulates a broad spectrum of cell-fate determinations. Acts as a transcriptional repressor when it is not associated with Notch proteins. When associated with some Notch protein, it acts as a transcriptional activator that activates transcription of Notch target genes. Required for the transcriptional expression of Brachyury, suggesting that it participates in notochord differentiation. The protein is Suppressor of hairless homolog (Su(H)) of Ciona intestinalis (Transparent sea squirt).